Here is a 200-residue protein sequence, read N- to C-terminus: MTRLILATRNAGKITELRAILADAGLPHDLVGADAYPHIPDVKETGVTFAENALLKAHALAEATGLPAVADDSGLCVDVLNGAPGIFSARWAGRHGDDQANLDLLLAQIADIADEHRGAHFACAAALALPDGTERVVEGQLKGTLRHAPAGTGGFGYDPILQPEGETRTCAELTAEEKNAISHRGKAFRALVPVVRELLG.

8–13 (TRNAGK) contributes to the substrate binding site. Catalysis depends on D72, which acts as the Proton acceptor. D72 contributes to the Mg(2+) binding site. Residues S73, 155-158 (FGYD), K178, and 183-184 (HR) each bind substrate.

The protein belongs to the HAM1 NTPase family. As to quaternary structure, homodimer. The cofactor is Mg(2+).

The catalysed reaction is XTP + H2O = XMP + diphosphate + H(+). The enzyme catalyses dITP + H2O = dIMP + diphosphate + H(+). It carries out the reaction ITP + H2O = IMP + diphosphate + H(+). Its function is as follows. Pyrophosphatase that catalyzes the hydrolysis of nucleoside triphosphates to their monophosphate derivatives, with a high preference for the non-canonical purine nucleotides XTP (xanthosine triphosphate), dITP (deoxyinosine triphosphate) and ITP. Seems to function as a house-cleaning enzyme that removes non-canonical purine nucleotides from the nucleotide pool, thus preventing their incorporation into DNA/RNA and avoiding chromosomal lesions. This Streptomyces coelicolor (strain ATCC BAA-471 / A3(2) / M145) protein is dITP/XTP pyrophosphatase.